The chain runs to 236 residues: MALKKKLNFLWTLVLYLIASRLPKAFGKDLPRVPTITDPKFIDAFLNIHNELRRKVQPPAADMNQLFWDQQLAKLAKAWTRECKLAHNPCIKQRYECLEDYDFIGENIYLGRIETQPEDVVINWYNESKYFNFDFNTCSEMCGHYTQVVWAKTVKIGCAVSNCPNLKGFSAGLFVCNYSPAGNFIGFRPYTRGDSCSMCGQKTCENSLCRPMNRKTPHHKAACHVLVLGFILQSLL.

The N-terminal stretch at 1–27 (MALKKKLNFLWTLVLYLIASRLPKAFG) is a signal peptide. The SCP domain maps to 46–178 (LNIHNELRRK…FSAGLFVCNY (133 aa)). A glycan (N-linked (GlcNAc...) asparagine) is linked at Asn-126.

The protein belongs to the CRISP family. In terms of assembly, part of a oolemmal binding multimeric complex (IZUMO1 complex) composed at least of IZUMO1 and GLIPR1L1; the complex assemblage is influenced by the maturation status of the male germ cell. Interacts with IZUMO1. N-glycosylated. N-glycosylation decreases during the transit in the caput. In terms of tissue distribution, expressed in testis (at protein level). Little or no expression in other tissues tested.

Its subcellular location is the cytoplasmic vesicle. The protein localises to the secretory vesicle. The protein resides in the acrosome. It localises to the cell membrane. It is found in the membrane raft. Its subcellular location is the secreted. Functionally, required for optimal fertilization at the stage of sperm-oocyte fusion, plays a role in optimizing acrosome function, the translocation of IZUMO1 during the acrosome reaction and the fertilization process. Component of epididymosomes, one type of membranous microvesicules which mediate the transfer of lipids and proteins to spermatozoa plasma membrane during epididymal maturation. Also component of the CD9-positive microvesicules found in the cauda region. The protein is GLIPR1-like protein 1 of Mus musculus (Mouse).